We begin with the raw amino-acid sequence, 478 residues long: Glutamate--tRNA ligase 1 (478 aa).

The short motif at 10 to 20 (PSPTGFLHIGG) is the 'HIGH' region element. The 'KMSKS' region signature appears at 242–246 (KLSKR). Lys-245 provides a ligand contact to ATP.

This sequence belongs to the class-I aminoacyl-tRNA synthetase family. Glutamate--tRNA ligase type 1 subfamily. As to quaternary structure, monomer.

Its subcellular location is the cytoplasm. The enzyme catalyses tRNA(Glu) + L-glutamate + ATP = L-glutamyl-tRNA(Glu) + AMP + diphosphate. In terms of biological role, catalyzes the attachment of glutamate to tRNA(Glu) in a two-step reaction: glutamate is first activated by ATP to form Glu-AMP and then transferred to the acceptor end of tRNA(Glu). This is Glutamate--tRNA ligase 1 from Orientia tsutsugamushi (strain Boryong) (Rickettsia tsutsugamushi).